A 444-amino-acid chain; its full sequence is Tubulin beta chain (444 aa).

Residues Gln-11, Glu-68, Ser-137, Gly-141, Thr-142, Gly-143, Asn-203, and Asn-225 each contribute to the GTP site. Glu-68 contacts Mg(2+). A disordered region spans residues 424–444 (QDATAEEEGEFDEDEEMDEMM). A compositionally biased stretch (acidic residues) spans 427-444 (TAEEEGEFDEDEEMDEMM).

The protein belongs to the tubulin family. As to quaternary structure, dimer of alpha and beta chains. A typical microtubule is a hollow water-filled tube with an outer diameter of 25 nm and an inner diameter of 15 nM. Alpha-beta heterodimers associate head-to-tail to form protofilaments running lengthwise along the microtubule wall with the beta-tubulin subunit facing the microtubule plus end conferring a structural polarity. Microtubules usually have 13 protofilaments but different protofilament numbers can be found in some organisms and specialized cells. The cofactor is Mg(2+).

Its subcellular location is the cytoplasm. It localises to the cytoskeleton. Functionally, tubulin is the major constituent of microtubules, a cylinder consisting of laterally associated linear protofilaments composed of alpha- and beta-tubulin heterodimers. Microtubules grow by the addition of GTP-tubulin dimers to the microtubule end, where a stabilizing cap forms. Below the cap, tubulin dimers are in GDP-bound state, owing to GTPase activity of alpha-tubulin. This chain is Tubulin beta chain, found in Achlya klebsiana.